The following is a 525-amino-acid chain: ATP-dependent RNA helicase dbp8 (525 aa).

A compositionally biased stretch (polar residues) spans 1-29; it reads MAPLSTPESISREISVSSDASADESTSLD. Residues 1–76 are disordered; sequence MAPLSTPESI…TNATSSRKDD (76 aa). Positions 95 to 123 match the Q motif motif; it reads NSFKALNVAPWLVGSLTTMAVRKPTAIQR. The region spanning 126-305 is the Helicase ATP-binding domain; the sequence is IPEILKGRDC…SMPQTPGKPP (180 aa). Position 139 to 146 (139 to 146) interacts with ATP; the sequence is SRTGSGKT. The short motif at 248–251 is the DEAD box element; the sequence is DEAD. A Helicase C-terminal domain is found at 337–484; it reads AFLHVLLSTE…EYEEEGVNLE (148 aa).

Belongs to the DEAD box helicase family. DDX49/DBP8 subfamily.

Its subcellular location is the nucleus. The protein resides in the nucleolus. The enzyme catalyses ATP + H2O = ADP + phosphate + H(+). In terms of biological role, ATP-binding RNA helicase involved in 40S ribosomal subunit biogenesis and is required for the normal formation of 18S rRNAs through pre-rRNA processing at A0, A1 and A2 sites. Required for vegetative growth. This Emericella nidulans (strain FGSC A4 / ATCC 38163 / CBS 112.46 / NRRL 194 / M139) (Aspergillus nidulans) protein is ATP-dependent RNA helicase dbp8 (dbp8).